The following is a 595-amino-acid chain: Actin-histidine N-methyltransferase (595 aa).

A disordered region spans residues 1–22; sequence MGKKSRVKTQKSGTGATATVSP. The span at 10–20 shows a compositional bias: polar residues; that stretch reads QKSGTGATATV. Residues R75, 104–106, R254, 275–279, and 325–327 contribute to the S-adenosyl-L-methionine site; these read EGF, DMCNH, and SGF. One can recognise an SET domain in the interval 94–314; sequence EGFEMVNFKE…AGEQIYIFYG (221 aa). S513 is modified (phosphoserine). A compositionally biased stretch (polar residues) spans 549-563; the sequence is ENGLVNGENSIPNGT. A disordered region spans residues 549–595; it reads ENGLVNGENSIPNGTRSEDENLNQEESKRAVEDAKGSSSDRADAVKE. Residues 573–595 show a composition bias toward basic and acidic residues; that stretch reads EESKRAVEDAKGSSSDRADAVKE.

It belongs to the class V-like SAM-binding methyltransferase superfamily. SETD3 actin-histidine methyltransferase family. Interacts with MYOD1. Post-translationally, phosphorylated by GSK3B, which is required for recognition by the SCF(FBXW7) complex and subsequent degradation. Ubiquitinated by the SCF(FBXW7) complex following phosphorylation by GSK3B, leading to its degradation by the proteasome.

The protein resides in the cytoplasm. It localises to the nucleus. It catalyses the reaction L-histidyl-[protein] + S-adenosyl-L-methionine = N(tele)-methyl-L-histidyl-[protein] + S-adenosyl-L-homocysteine + H(+). Functionally, protein-histidine N-methyltransferase that specifically mediates 3-methylhistidine (tele-methylhistidine) methylation of actin at 'His-73'. Histidine methylation of actin is required for smooth muscle contraction of the laboring uterus during delivery. Does not have protein-lysine N-methyltransferase activity and probably only catalyzes histidine methylation of actin. This chain is Actin-histidine N-methyltransferase, found in Callithrix jacchus (White-tufted-ear marmoset).